The primary structure comprises 365 residues: DNA replication and repair protein RecF (365 aa).

An ATP-binding site is contributed by 30–37 (GANGQGKT).

This sequence belongs to the RecF family.

Its subcellular location is the cytoplasm. The RecF protein is involved in DNA metabolism; it is required for DNA replication and normal SOS inducibility. RecF binds preferentially to single-stranded, linear DNA. It also seems to bind ATP. The protein is DNA replication and repair protein RecF of Geobacter metallireducens (strain ATCC 53774 / DSM 7210 / GS-15).